Consider the following 149-residue polypeptide: Calmodulin-1 (149 aa).

The residue at position 2 (alanine 2) is an N-acetylalanine. 4 EF-hand domains span residues 8-43 (EQIA…LGQN), 44-79 (PTEA…KMKD), 81-116 (DSEE…LGEK), and 117-149 (LTDE…MTAK). Aspartate 21 provides a ligand contact to Ca(2+). Lysine 22 carries the N6-acetyllysine; alternate modification. Lysine 22 participates in a covalent cross-link: Glycyl lysine isopeptide (Lys-Gly) (interchain with G-Cter in SUMO2); alternate. Lysine 22 participates in a covalent cross-link: Glycyl lysine isopeptide (Lys-Gly) (interchain with G-Cter in ubiquitin); alternate. Positions 23, 25, 27, and 32 each coordinate Ca(2+). Threonine 45 carries the phosphothreonine; by CaMK4 modification. Ca(2+)-binding residues include aspartate 57, aspartate 59, asparagine 61, threonine 63, and glutamate 68. The necessary and sufficient for interaction with PCP4 stretch occupies residues 77 to 149 (MKDTDSEEEI…EEFVQMMTAK (73 aa)). Serine 82 is modified (phosphoserine). Aspartate 94 serves as a coordination point for Ca(2+). An N6-acetyllysine modification is found at lysine 95. Residues aspartate 96, asparagine 98, and tyrosine 100 each coordinate Ca(2+). Position 100 is a phosphotyrosine (tyrosine 100). Serine 102 carries the phosphoserine modification. Glutamate 105 provides a ligand contact to Ca(2+). Threonine 111 carries the phosphothreonine modification. Lysine 116 carries the N6,N6,N6-trimethyllysine; alternate modification. Position 116 is an N6-methyllysine; alternate (lysine 116). Ca(2+)-binding residues include aspartate 130, aspartate 132, aspartate 134, and glutamine 136. A Phosphotyrosine modification is found at tyrosine 139. Glutamate 141 serves as a coordination point for Ca(2+).

It belongs to the calmodulin family. Homotetramer. Interacts with MYO1C, MYO5A and RRAD. Interacts with MYO10. Interacts with CEP97, CCP110, TTN/titin and SRY. Interacts with USP6; the interaction is calcium dependent. Interacts with CDK5RAP2. Interacts with SCN5A. Interacts with RYR1. Interacts with FCHO1. Interacts with MIP in a 1:2 stoichiometry; the interaction with the cytoplasmic domains from two MIP subunits promotes MIP water channel closure. Interacts with ORAI1; this may play a role in the regulation of ORAI1-mediated calcium transport. Interacts with IQCF1. Interacts with SYT7. Interacts with CEACAM1 (via cytoplasmic domain); this interaction is in a calcium dependent manner and reduces homophilic cell adhesion through dissociation of dimer. Interacts with RYR2; regulates RYR2 calcium-release channel activity. Interacts with PCP4; regulates calmodulin calcium-binding. Interacts with the heterotetrameric KCNQ2 and KCNQ3 channel; the interaction is calcium-independent, constitutive and participates in the proper assembly of a functional heterotetrameric M channel. Interacts with alpha-synuclein/SNCA. Interacts with SLC9A1 in a calcium-dependent manner. In the absence of Ca(+2), interacts with GIMAP4 (via IQ domain). Interacts with SCN8A; the interaction modulates the inactivation rate of SCN8A. Interaction with KIF1A; the interaction is increased in presence of calcium and increases neuronal dense core vesicles motility. Interacts with KCNN3. Interacts with KCNQ1 (via C-terminus); forms a heterooctameric structure (with 4:4 KCNQ1:CALM stoichiometry) in a calcium-independent manner. Interacts with PIK3C3; the interaction modulates PIK3C3 kinase activity. Interacts with HINT1; interaction increases in the presence of calcium ions. Interacts with HINT3. Interacts with GARIN2; in mature sperm flagella. Interacts with IQUB. Interacts with SLC26A5 (via STAS domain); this interaction is calcium-dependent and the STAS domain interacts with only one lobe of CALM which is an elongated conformation. Ca(2+)-bound CALM1 binds CNGA1:CNGB1 channel (via CaM1 and CaM2 regions); this interaction modulates the affinity of the channel for cNMPs in response to intracellular Ca(2+) levels. Interacts with ITPR1; this interaction inhibits inositol 1,4,5 trisphosphate binding in both the presence and absence of calcium and 1,4,5 trisphosphate-induced calcium release in the presence of calcium. Component of the SIFI complex. Interacts with KCNN4; this interaction allows channel opening. Interacts with KCNN2; this interaction regulates the channel activity through calcium-binding. In terms of assembly, (Microbial infection) Interacts with Rubella virus protease/methyltransferase p150. As to quaternary structure, (Microbial infection) Interacts with Legionella pneumophila glutamylase SidJ. (Microbial infection) Interacts with C.violaceum CopC. C.violaceum CopC interacts specifically with the apo form of calmodulin. In terms of assembly, (Microbial infection) Interacts with S.flexneri OspC1 and OspC3. S.flexneri OspC1 and OspC3 interact specifically with the apo form of calmodulin and prevents calcium-binding. In terms of processing, ubiquitination results in a strongly decreased activity. Post-translationally, phosphorylation results in a decreased activity.

The protein localises to the cytoplasm. It is found in the cytoskeleton. It localises to the spindle. The protein resides in the spindle pole. Its subcellular location is the microtubule organizing center. The protein localises to the centrosome. It is found in the cell projection. It localises to the cilium. The protein resides in the flagellum. (Microbial infection) Inactivated by S.flexneri OspC1 and OspC3 proteins, which specifically bind the apo-form of calmodulin, thereby preventing calcium-binding and activity. Functionally, calmodulin acts as part of a calcium signal transduction pathway by mediating the control of a large number of enzymes, ion channels, aquaporins and other proteins through calcium-binding. Calcium-binding is required for the activation of calmodulin. Among the enzymes to be stimulated by the calmodulin-calcium complex are a number of protein kinases, such as myosin light-chain kinases and calmodulin-dependent protein kinase type II (CaMK2), and phosphatases. Together with CCP110 and centrin, is involved in a genetic pathway that regulates the centrosome cycle and progression through cytokinesis. Is a regulator of voltage-dependent L-type calcium channels. Mediates calcium-dependent inactivation of CACNA1C. Positively regulates calcium-activated potassium channel activity of KCNN2. Forms a potassium channel complex with KCNQ1 and regulates electrophysiological activity of the channel via calcium-binding. Acts as a sensor to modulate the endoplasmic reticulum contacts with other organelles mediated by VMP1:ATP2A2. (Microbial infection) Required for Legionella pneumophila SidJ glutamylase activity. In terms of biological role, (Microbial infection) Required for C.violaceum CopC and S.flexneri OspC3 arginine ADP-riboxanase activity. The protein is Calmodulin-1 of Homo sapiens (Human).